Consider the following 137-residue polypeptide: Small ribosomal subunit protein uS12 (137 aa).

Disordered stretches follow at residues 1-21 (MPTI…KSKS) and 33-57 (KVQT…TPRK). Residue D102 is modified to 3-methylthioaspartic acid.

The protein belongs to the universal ribosomal protein uS12 family. As to quaternary structure, part of the 30S ribosomal subunit. Contacts proteins S8 and S17. May interact with IF1 in the 30S initiation complex.

In terms of biological role, with S4 and S5 plays an important role in translational accuracy. Its function is as follows. Interacts with and stabilizes bases of the 16S rRNA that are involved in tRNA selection in the A site and with the mRNA backbone. Located at the interface of the 30S and 50S subunits, it traverses the body of the 30S subunit contacting proteins on the other side and probably holding the rRNA structure together. The combined cluster of proteins S8, S12 and S17 appears to hold together the shoulder and platform of the 30S subunit. This is Small ribosomal subunit protein uS12 from Streptococcus pneumoniae (strain ATCC 700669 / Spain 23F-1).